Consider the following 136-residue polypeptide: Small ribosomal subunit protein uS12 (136 aa).

The interval 1–28 (MPTIQQLIRSERQELKKKTKSPALKSCP) is disordered. 3-methylthioaspartic acid is present on D89. A disordered region spans residues 101-136 (TLDTAGVKDRKQGRSKYGAKRPKPGAASTASTGKKR). Residues 113 to 123 (GRSKYGAKRPK) are compositionally biased toward basic residues.

Belongs to the universal ribosomal protein uS12 family. As to quaternary structure, part of the 30S ribosomal subunit. Contacts proteins S8 and S17. May interact with IF1 in the 30S initiation complex.

Its function is as follows. With S4 and S5 plays an important role in translational accuracy. Interacts with and stabilizes bases of the 16S rRNA that are involved in tRNA selection in the A site and with the mRNA backbone. Located at the interface of the 30S and 50S subunits, it traverses the body of the 30S subunit contacting proteins on the other side and probably holding the rRNA structure together. The combined cluster of proteins S8, S12 and S17 appears to hold together the shoulder and platform of the 30S subunit. This Cyanothece sp. (strain PCC 7425 / ATCC 29141) protein is Small ribosomal subunit protein uS12.